Consider the following 199-residue polypeptide: N-(5'-phosphoribosyl)anthranilate isomerase (199 aa).

The protein belongs to the TrpF family.

The catalysed reaction is N-(5-phospho-beta-D-ribosyl)anthranilate = 1-(2-carboxyphenylamino)-1-deoxy-D-ribulose 5-phosphate. It participates in amino-acid biosynthesis; L-tryptophan biosynthesis; L-tryptophan from chorismate: step 3/5. This Lacticaseibacillus casei (strain BL23) (Lactobacillus casei) protein is N-(5'-phosphoribosyl)anthranilate isomerase.